The sequence spans 698 residues: uncharacterized protein (698 aa).

A signal peptide spans 1 to 17 (MKKRHLLSLLALGISTA). Residue cysteine 18 is the site of N-palmitoyl cysteine attachment. Cysteine 18 carries S-diacylglycerol cysteine lipidation.

To E.coli YmcA.

It localises to the cell membrane. This is an uncharacterized protein from Escherichia coli (strain K12).